A 152-amino-acid polypeptide reads, in one-letter code: MALVSLKLQWADGADTSVPLPAYETSGAAGADIRANCPDGPVTLAPGARALVPTGLRMAIPQGYEVQIRPRSGLALRHGITLVNSPGTIDSDYRGAVGVIMQNLGDAAFEITHGMRIAQMVVAPVVQASFELSDSLSETDRGSGGFGSTGGD.

Substrate is bound by residues 71 to 73, Asn84, and 88 to 90; these read RSG and TID.

This sequence belongs to the dUTPase family. Requires Mg(2+) as cofactor.

It catalyses the reaction dUTP + H2O = dUMP + diphosphate + H(+). It functions in the pathway pyrimidine metabolism; dUMP biosynthesis; dUMP from dCTP (dUTP route): step 2/2. In terms of biological role, this enzyme is involved in nucleotide metabolism: it produces dUMP, the immediate precursor of thymidine nucleotides and it decreases the intracellular concentration of dUTP so that uracil cannot be incorporated into DNA. This is Deoxyuridine 5'-triphosphate nucleotidohydrolase from Roseobacter denitrificans (strain ATCC 33942 / OCh 114) (Erythrobacter sp. (strain OCh 114)).